The following is an 874-amino-acid chain: Alanine--tRNA ligase (874 aa).

Zn(2+) is bound by residues histidine 562, histidine 566, cysteine 664, and histidine 668.

Belongs to the class-II aminoacyl-tRNA synthetase family. Zn(2+) is required as a cofactor.

It is found in the cytoplasm. The catalysed reaction is tRNA(Ala) + L-alanine + ATP = L-alanyl-tRNA(Ala) + AMP + diphosphate. Functionally, catalyzes the attachment of alanine to tRNA(Ala) in a two-step reaction: alanine is first activated by ATP to form Ala-AMP and then transferred to the acceptor end of tRNA(Ala). Also edits incorrectly charged Ser-tRNA(Ala) and Gly-tRNA(Ala) via its editing domain. The protein is Alanine--tRNA ligase of Shewanella sp. (strain ANA-3).